A 111-amino-acid polypeptide reads, in one-letter code: UPF0342 protein gbs1446 (111 aa).

The protein belongs to the UPF0342 family.

The protein is UPF0342 protein gbs1446 of Streptococcus agalactiae serotype III (strain NEM316).